The following is a 167-amino-acid chain: 2-C-methyl-D-erythritol 2,4-cyclodiphosphate synthase (167 aa).

The a divalent metal cation site is built by Asp15 and His17. Residues 15–17 (DIH) and 43–44 (HS) contribute to the 4-CDP-2-C-methyl-D-erythritol 2-phosphate site. Residue His51 coordinates a divalent metal cation. Residues 65–67 (DIG), 141–144 (TTNE), and Arg151 each bind 4-CDP-2-C-methyl-D-erythritol 2-phosphate.

This sequence belongs to the IspF family. In terms of assembly, homotrimer. It depends on a divalent metal cation as a cofactor.

The enzyme catalyses 4-CDP-2-C-methyl-D-erythritol 2-phosphate = 2-C-methyl-D-erythritol 2,4-cyclic diphosphate + CMP. Its pathway is isoprenoid biosynthesis; isopentenyl diphosphate biosynthesis via DXP pathway; isopentenyl diphosphate from 1-deoxy-D-xylulose 5-phosphate: step 4/6. Functionally, involved in the biosynthesis of isopentenyl diphosphate (IPP) and dimethylallyl diphosphate (DMAPP), two major building blocks of isoprenoid compounds. Catalyzes the conversion of 4-diphosphocytidyl-2-C-methyl-D-erythritol 2-phosphate (CDP-ME2P) to 2-C-methyl-D-erythritol 2,4-cyclodiphosphate (ME-CPP) with a corresponding release of cytidine 5-monophosphate (CMP). The chain is 2-C-methyl-D-erythritol 2,4-cyclodiphosphate synthase from Prochlorococcus marinus (strain MIT 9312).